Reading from the N-terminus, the 332-residue chain is Ferredoxin--NADP reductase 2 (332 aa).

Residues glutamate 37, glutamine 45, tyrosine 50, valine 90, phenylalanine 124, aspartate 285, and threonine 326 each contribute to the FAD site.

This sequence belongs to the ferredoxin--NADP reductase type 2 family. As to quaternary structure, homodimer. Requires FAD as cofactor.

The enzyme catalyses 2 reduced [2Fe-2S]-[ferredoxin] + NADP(+) + H(+) = 2 oxidized [2Fe-2S]-[ferredoxin] + NADPH. This Bacillus licheniformis (strain ATCC 14580 / DSM 13 / JCM 2505 / CCUG 7422 / NBRC 12200 / NCIMB 9375 / NCTC 10341 / NRRL NRS-1264 / Gibson 46) protein is Ferredoxin--NADP reductase 2.